Here is a 196-residue protein sequence, read N- to C-terminus: uncharacterized protein (196 aa).

Residues 1 to 183 (MREFHYGVHM…RFLFILSDLG (183 aa)) form the Macro domain.

Belongs to the MacroD-type family.

This is an uncharacterized protein from Thermoplasma acidophilum (strain ATCC 25905 / DSM 1728 / JCM 9062 / NBRC 15155 / AMRC-C165).